The chain runs to 189 residues: Chitin synthase 2 (189 aa).

It belongs to the chitin synthase family. Class II subfamily.

The protein resides in the cell membrane. The enzyme catalyses [(1-&gt;4)-N-acetyl-beta-D-glucosaminyl](n) + UDP-N-acetyl-alpha-D-glucosamine = [(1-&gt;4)-N-acetyl-beta-D-glucosaminyl](n+1) + UDP + H(+). Functionally, polymerizes chitin, a structural polymer of the cell wall and septum, by transferring the sugar moiety of UDP-GlcNAc to the non-reducing end of the growing chitin polymer. This chain is Chitin synthase 2 (CHS2), found in Ajellomyces dermatitidis (Blastomyces dermatitidis).